The sequence spans 77 residues: Cell division topological specificity factor (77 aa).

Belongs to the MinE family.

Its function is as follows. Prevents the cell division inhibition by proteins MinC and MinD at internal division sites while permitting inhibition at polar sites. This ensures cell division at the proper site by restricting the formation of a division septum at the midpoint of the long axis of the cell. The protein is Cell division topological specificity factor of Nautilia profundicola (strain ATCC BAA-1463 / DSM 18972 / AmH).